Reading from the N-terminus, the 313-residue chain is Olfactory receptor 10P1 (313 aa).

At 1–25 the chain is on the extracellular side; it reads MAGENHTTLPEFLLLGFSDLKALQG. A glycan (N-linked (GlcNAc...) asparagine) is linked at Asn-5. Residues 26–46 traverse the membrane as a helical segment; the sequence is PLFWVVLLVYLVTLLGNSLII. Over 47-54 the chain is Cytoplasmic; it reads LLTQVSPA. A helical membrane pass occupies residues 55–75; sequence LHSPMYFFLRQLSVVELFYTT. Residues 76 to 100 are Extracellular-facing; that stretch reads DIVPRTLANLGSPHPQAISFQGCAA. The helical transmembrane segment at 101-121 threads the bilayer; it reads QMYVFIVLGISECCLLTAMAY. The Cytoplasmic portion of the chain corresponds to 122 to 140; sequence DRYVAICQPLRYSTLLSPR. A helical transmembrane segment spans residues 141–161; the sequence is ACMAMVGTSWLTGIITATTHA. Over 162 to 198 the chain is Extracellular; sequence SLIFSLPFRSHPIIPHFLCDILPVLRLASAGKHRSEI. A helical transmembrane segment spans residues 199 to 218; that stretch reads SVMTATIVFIMIPFSLIVTS. The Cytoplasmic portion of the chain corresponds to 219-238; sequence YIRILGAILAMASTQSRRKV. Residues 239-259 form a helical membrane-spanning segment; the sequence is FSTCSSHLLVVSLFFGTASIT. The Extracellular portion of the chain corresponds to 260 to 272; the sequence is YIRPQAGSSVTTD. The helical transmembrane segment at 273–293 threads the bilayer; the sequence is RVLSLFYTVITPMLNPIIYTL. The Cytoplasmic portion of the chain corresponds to 294–313; that stretch reads RNKDVRRALRHLVKRQRPSP.

It belongs to the G-protein coupled receptor 1 family.

It localises to the cell membrane. In terms of biological role, odorant receptor. The sequence is that of Olfactory receptor 10P1 (OR10P1) from Homo sapiens (Human).